A 218-amino-acid polypeptide reads, in one-letter code: Small ribosomal subunit protein uS3c (218 aa).

A KH type-2 domain is found at 47–118 (VQKNMRIFSG…KLNIAITRIG (72 aa)).

This sequence belongs to the universal ribosomal protein uS3 family. As to quaternary structure, part of the 30S ribosomal subunit.

The protein localises to the plastid. The protein resides in the chloroplast. This is Small ribosomal subunit protein uS3c (rps3) from Cucumis sativus (Cucumber).